Here is a 360-residue protein sequence, read N- to C-terminus: Epoxyqueuosine reductase (360 aa).

The active-site Proton donor is D142. The 30-residue stretch at 187–216 (APTEPVTAHCGSCQACMDVCPTQAIVAPHR) folds into the 4Fe-4S ferredoxin-type domain. Positions 196, 199, 202, 206, 222, 249, 252, and 256 each coordinate [4Fe-4S] cluster.

The protein belongs to the QueG family. In terms of assembly, monomer. Requires cob(II)alamin as cofactor. The cofactor is [4Fe-4S] cluster.

It localises to the cytoplasm. The catalysed reaction is epoxyqueuosine(34) in tRNA + AH2 = queuosine(34) in tRNA + A + H2O. It functions in the pathway tRNA modification; tRNA-queuosine biosynthesis. In terms of biological role, catalyzes the conversion of epoxyqueuosine (oQ) to queuosine (Q), which is a hypermodified base found in the wobble positions of tRNA(Asp), tRNA(Asn), tRNA(His) and tRNA(Tyr). The sequence is that of Epoxyqueuosine reductase from Alicycliphilus denitrificans (strain DSM 14773 / CIP 107495 / K601).